A 954-amino-acid polypeptide reads, in one-letter code: Protein teashirt (954 aa).

3 disordered regions span residues 20–91 (LPTA…SLPS), 167–207 (ESAE…PQLG), and 276–331 (VKGG…GSGA). The span at 47–57 (HGGGAGSGGVG) shows a compositional bias: gly residues. Over residues 292 to 303 (SKATTPQAASQP) the composition is skewed to polar residues. A compositionally biased stretch (gly residues) spans 318-328 (SGGGSGGGAAG). The C2H2-type 1 zinc-finger motif lies at 354-378 (FRCVWCKQSFPTLEALTTHMKDSKH). The segment at 383–444 (VPPFGNLPSN…YRGDPPTPLP (62 aa)) is disordered. Residues 417–428 (SGSASNHSPSAN) are compositionally biased toward low complexity. 2 C2H2-type zinc fingers span residues 466-490 (LKCM…ETQH) and 533-557 (LTCK…KNNH). 3 disordered regions span residues 563-622 (LQSA…DKND), 689-714 (FDTP…TSPV), and 748-935 (TSSE…NLTA). Residues 568-578 (ARKRPAPKKRE) are compositionally biased toward basic residues. The span at 579-588 (KSLPVRKLLE) shows a compositional bias: basic and acidic residues. Positions 696–712 (ASLPASSPSNSSTKNTS) are enriched in low complexity. 2 positions are modified to phosphoserine: S750 and S758. The segment covering 778–807 (GHDEESSKPAIKQEREAESKPVKMEIKSEF) has biased composition (basic and acidic residues). Low complexity predominate over residues 842 to 851 (PKTPSSAASP). 2 stretches are compositionally biased toward polar residues: residues 862–885 (AESQ…GSSE) and 893–907 (DSLN…SLGS). Residues 910-926 (AGANSRAKLAAAAAAGG) show a composition bias toward low complexity.

Belongs to the teashirt C2H2-type zinc-finger protein family. Binds arm. In terms of tissue distribution, shows a dynamic expression pattern during embryogenesis. Expressed in the embryonic trunk region (PS 3-13) with expression strongest in the thoracic segments. Expressed in a small group of cells corresponding to the anal tuft from stage 14. Strongly expressed in the embryonic ventral nerve cord. Also expressed in the proximal domain of the leg imaginal disk and in the region of the wing disk that will give rise to the proximal wing hinge. Expressed at high levels in the anterior and central embryonic midgut mesoderm and in the embryonic midgut endoderm. Expressed at a low level in more posterior visceral mesoderm of the gut. From stage 12 onwards, tsh and tio are colocalized in some cells of the CNS, trunk epidermis, hindgut and Malpighian tubules.

The protein localises to the nucleus. It localises to the cytoplasm. Homeotic protein that acts downstream of Arm in the Wg cascade during embryogenesis to determine segment identity throughout the entire trunk. Acts cooperatively with other trunk homeotic proteins to repress head homeotic genes and therefore repress head segmental identity. Necessary, in combination with Scr, for the formation of the prothoracic segment. Promotes eye development in the dorsal region of the eye disk and suppresses eye development in the ventral region in combination with Wg-signaling and several early dorso-ventral eye patterning genes. Required for proper development of proximal leg segments. Has differential functions along the dorso-ventral axs of the antennal and leg disks. May play a role in wing hinge development. Possible involvement in chromatin structure for modulation of transcription. Binds DNA and can act as both a transcriptional repressor and activator. Positively regulates its own expression as well as that of Dll. Negatively regulates the expression of mod. Required for Wg-mediated transcriptional repression of Ubx in the midgut. Also represses transcription of lab in the midgut and is necessary for the proper formation of anterior and central midgut structures. Tiptop (tio) and teashirt (tsh) have, on the whole, common activities. Tio and tsh repress each other's expression and tsh has a crucial role for trunk patterning that is in part masked by ectopic expression of tiptop. Both genes share a common activity required for the activation of Ser and svb and the maintenance of en and wg. The protein is Protein teashirt (tsh) of Drosophila melanogaster (Fruit fly).